The primary structure comprises 349 residues: Guanine nucleotide-binding protein-like alpha-10 subunit (349 aa).

In terms of domain architecture, G-alpha spans 33 to 349; that stretch reads EEIRVLIYGQ…LNITYNSVKN (317 aa). A G1 motif region spans residues 36 to 49; the sequence is RVLIYGQKKVGVTT. Residues 168–176 are G2 motif; sequence DLNFIKLTQ. The tract at residues 191–200 is G3 motif; sequence IKMIEMGIQT. GTP-binding positions include 195–199 and 266–269; these read EMGIQ and NKKD. Positions 262–269 are G4 motif; the sequence is IVFFNKKD. The G5 motif stretch occupies residues 320 to 325; sequence NEESEV.

Belongs to the G-alpha family.

The chain is Guanine nucleotide-binding protein-like alpha-10 subunit (gpaJ) from Dictyostelium discoideum (Social amoeba).